A 386-amino-acid chain; its full sequence is Methionine aminopeptidase 1 (386 aa).

An N-acetylalanine modification is found at Ala-2. A C6H2-type zinc finger spans residues 6–59; sequence TRVCETDGCSSEAKLQCPTCIKLGIQGSYFCSQECFKGSWATHKLLHKKAKDEK. Cys-9, Cys-14, Cys-22, Cys-25, Cys-36, Cys-40, His-48, and His-52 together coordinate Zn(2+). His-203 contacts a protein. Zn(2+) is bound by residues Asp-220, Asp-231, and His-294. His-301 provides a ligand contact to a protein. Glu-327 and Glu-358 together coordinate Zn(2+).

Belongs to the peptidase M24A family. Methionine aminopeptidase type 1 subfamily. In terms of assembly, associates with the 60S ribosomal subunit of the 80S translational complex. Zn(2+) serves as cofactor. Requires Co(2+) as cofactor. The cofactor is Mn(2+). It depends on Fe(2+) as a cofactor.

The protein localises to the cytoplasm. The enzyme catalyses Release of N-terminal amino acids, preferentially methionine, from peptides and arylamides.. Cotranslationally removes the N-terminal methionine from nascent proteins. The N-terminal methionine is often cleaved when the second residue in the primary sequence is small and uncharged (Met-Ala-, Cys, Gly, Pro, Ser, Thr, or Val). Required for normal progression through the cell cycle. This chain is Methionine aminopeptidase 1 (METAP1), found in Homo sapiens (Human).